Reading from the N-terminus, the 740-residue chain is Catalase-peroxidase (740 aa).

The N-terminal stretch at 1–27 (MFKSTLPIAAAISVALTSMVLPAKALA) is a signal peptide. Residues 106-228 (WHSAGVYRVH…LAAVEMGLIY (123 aa)) constitute a cross-link (tryptophyl-tyrosyl-methioninium (Trp-Tyr) (with M-254)). H107 acts as the Proton acceptor in catalysis. Residues 228–254 (YVNPEGPHGKPDPLLAANDIRMSFGRM) constitute a cross-link (tryptophyl-tyrosyl-methioninium (Tyr-Met) (with W-106)). H269 serves as a coordination point for heme b.

It belongs to the peroxidase family. Peroxidase/catalase subfamily. As to quaternary structure, homodimer or homotetramer. Heme b serves as cofactor. Post-translationally, formation of the three residue Trp-Tyr-Met cross-link is important for the catalase, but not the peroxidase activity of the enzyme.

The enzyme catalyses H2O2 + AH2 = A + 2 H2O. It carries out the reaction 2 H2O2 = O2 + 2 H2O. Functionally, bifunctional enzyme with both catalase and broad-spectrum peroxidase activity. The polypeptide is Catalase-peroxidase (Colwellia psychrerythraea (strain 34H / ATCC BAA-681) (Vibrio psychroerythus)).